Consider the following 154-residue polypeptide: Ascorbate-specific PTS system EIIA component (154 aa).

In terms of domain architecture, PTS EIIA type-2 spans 6 to 150 (SLAENNSIRL…QEVLDLIDRT (145 aa)). H68 serves as the catalytic Tele-phosphohistidine intermediate. H68 carries the phosphohistidine modification.

It is found in the cytoplasm. The phosphoenolpyruvate-dependent sugar phosphotransferase system (sugar PTS), a major carbohydrate active transport system, catalyzes the phosphorylation of incoming sugar substrates concomitantly with their translocation across the cell membrane. The enzyme II UlaABC PTS system is involved in ascorbate transport. The sequence is that of Ascorbate-specific PTS system EIIA component (ulaC) from Salmonella choleraesuis (strain SC-B67).